The chain runs to 169 residues: 3-hydroxyanthranilate 3,4-dioxygenase (169 aa).

Arg44 serves as a coordination point for O2. Residues His48, Glu54, and His92 each contribute to the Fe cation site. Glu54 is a substrate binding site. Positions 96 and 106 each coordinate substrate. A divalent metal cation contacts are provided by Cys121, Cys124, Cys158, and Cys160.

It belongs to the 3-HAO family. It depends on Fe(2+) as a cofactor.

The protein localises to the cytoplasm. It carries out the reaction 3-hydroxyanthranilate + O2 = (2Z,4Z)-2-amino-3-carboxymuconate 6-semialdehyde. Its pathway is cofactor biosynthesis; NAD(+) biosynthesis; quinolinate from L-kynurenine: step 3/3. Catalyzes the oxidative ring opening of 3-hydroxyanthranilate to 2-amino-3-carboxymuconate semialdehyde, which spontaneously cyclizes to quinolinate. The sequence is that of 3-hydroxyanthranilate 3,4-dioxygenase from Meyerozyma guilliermondii (strain ATCC 6260 / CBS 566 / DSM 6381 / JCM 1539 / NBRC 10279 / NRRL Y-324) (Yeast).